The primary structure comprises 471 residues: Phosphatidylinositol 4-kinase type 2-alpha (471 aa).

Disordered regions lie at residues 1–25 (MDETSPLVSPDRDQTDYSYQSQCSP) and 48–101 (PGSA…PDDP). The span at 90–101 (AERERNKFPDDP) shows a compositional bias: basic and acidic residues. The PI3K/PI4K catalytic domain maps to 117-445 (DILPERISQG…VQTPPVIVET (329 aa)). Positions 123 to 129 (ISQGSSG) are G-loop. Residues 124-130 (SQGSSGS) and lysine 145 contribute to the ATP site. Residues 150-152 (EPY) are important for substrate binding. The tract at residues 158-171 (KWTKWLQKLCCPCC) is important for interaction with membranes. Residues cysteine 167, cysteine 168, cysteine 170, and cysteine 171 are each lipidated (S-palmitoyl cysteine). 254 to 257 (QLFV) provides a ligand contact to ATP. An important for interaction with membranes region spans residues 261 to 269 (KDADYWLRR). The tract at residues 298-306 (RNTDRGNDN) is catalytic loop. The interval 336-356 (AIDNGLAFPLKHPDSWRAYPF) is activation loop. Residue aspartate 338 participates in ATP binding. The interval 351–360 (WRAYPFYWAW) is important for interaction with membranes.

It belongs to the PI3/PI4-kinase family. Type II PI4K subfamily.

The protein localises to the golgi apparatus. It is found in the trans-Golgi network membrane. The protein resides in the membrane raft. It localises to the endosome. Its subcellular location is the endosome membrane. The protein localises to the cytoplasmic vesicle. It is found in the cell projection. The protein resides in the dendrite. It localises to the presynaptic cell membrane. Its subcellular location is the synapse. The protein localises to the synaptosome. It is found in the mitochondrion. The protein resides in the membrane. It localises to the cell membrane. Its subcellular location is the perikaryon. The protein localises to the neuron projection. The catalysed reaction is a 1,2-diacyl-sn-glycero-3-phospho-(1D-myo-inositol) + ATP = a 1,2-diacyl-sn-glycero-3-phospho-(1D-myo-inositol 4-phosphate) + ADP + H(+). In terms of biological role, membrane-bound phosphatidylinositol-4 kinase (PI4-kinase) that catalyzes the phosphorylation of phosphatidylinositol (PI) to phosphatidylinositol 4-phosphate (PI4P), a lipid that plays important roles in endocytosis, Golgi function, protein sorting and membrane trafficking. Besides, phosphorylation of phosphatidylinositol (PI) to phosphatidylinositol 4-phosphate (PI4P) is the first committed step in the generation of phosphatidylinositol 4,5-bisphosphate (PIP2), a precursor of the second messenger inositol 1,4,5-trisphosphate (InsP3). In Xenopus tropicalis (Western clawed frog), this protein is Phosphatidylinositol 4-kinase type 2-alpha (pi4k2a).